The sequence spans 656 residues: Fidgetin-like protein 1 (656 aa).

A compositionally biased stretch (polar residues) spans 293-302 (KYSNQPQRNP). The disordered stretch occupies residues 293-354 (KYSNQPQRNP…QGNSEMNAPS (62 aa)). Residues 331–340 (RQEDVQDSNR) are compositionally biased toward basic and acidic residues. Residues A386 and 426-431 (GTGKTL) each bind ATP.

The protein belongs to the AAA ATPase family. Hexamer. Mg(2+) is required as a cofactor.

Its subcellular location is the nucleus. The protein localises to the cytoplasm. It is found in the perinuclear region. The catalysed reaction is ATP + H2O = ADP + phosphate + H(+). Its function is as follows. May be involved in DNA double-strand break (DBS) repair via homologous recombination (HR). May regulate osteoblast proliferation and differentiation. The polypeptide is Fidgetin-like protein 1 (fignl1) (Xenopus tropicalis (Western clawed frog)).